The chain runs to 1654 residues: Microtubule cross-linking factor 2 (1654 aa).

Residues 1–188 are disordered; sequence METPAGESSA…VAASSVGSSR (188 aa). Residues 55 to 66 show a composition bias toward low complexity; that stretch reads GSATACGTASSA. Residues 102–113 are compositionally biased toward pro residues; sequence GTGPRPPPPPPS. The span at 132–147 shows a compositional bias: low complexity; sequence LGLELALSSDAESAAG. Positions 209 to 238 are required for association with Golgi apparatus membrane; sequence PGGLVRELEELRSENDYLKDEIEELRAEML. Coiled-coil stretches lie at residues 216–279, 308–349, 448–546, 816–843, and 1079–1113; these read LEEL…AERR, SMRL…LQTE, LKLV…YRSE, IKDLQLVLAEAHDSLRGLQEQLSQERQL, and SQEKLQLVERLQGEKQQVEQQVKELQNRLSQLQKA. Residues 348–379 form a disordered region; sequence TELDRPREHSLKKRGTRSLGKTDKKPTAQEDS. The span at 1122–1145 shows a compositional bias: basic and acidic residues; the sequence is SDMEKQDNSWKEARSEKTHDKEGV. The disordered stretch occupies residues 1122–1146; that stretch reads SDMEKQDNSWKEARSEKTHDKEGVS. Residues Ser1165 and Ser1251 each carry the phosphoserine modification. Residues 1406-1505 form a KR-rich domain required for microtubules binding region; the sequence is LVSVRSKQIS…HSGSTESVWK (100 aa). Disordered regions lie at residues 1427–1450, 1537–1560, and 1627–1654; these read RPCCSPKYGSPKLQRRSVSKLDST, PTTAAGEESCKKPEPLSPASYHQP, and NTIRHSPSKCRLHPSESGWGGEERAAPQ. Residues 1628–1638 are compositionally biased toward basic residues; the sequence is TIRHSPSKCRL.

It belongs to the MTCL family. As to quaternary structure, interacts with CLASP2. Interacts with CLASP1. The C-terminal SOGA 25 kDa form occurs as a monomer. In terms of processing, proteolytically cleaved into a C-terminal SOGA 25 kDa form that is detected in plasma. Proteolytically cleaved in primary hepatocytes into a C-terminal SOGA 80 kDa form. Phosphorylated during mitosis in a CDK1-dependent manner. In terms of tissue distribution, expressed in liver (at protein level).

It localises to the secreted. It is found in the cytoplasm. The protein resides in the cytoskeleton. The protein localises to the golgi apparatus membrane. Its subcellular location is the midbody. Microtubule-associated factor that enables integration of the centrosomal and Golgi-associated microtubules on the Golgi membrane, supporting directional migration. Preferentially acts on the perinuclear microtubules accumulated around the Golgi. Associates with the Golgi membrane through the N-terminal coiled-coil region and directly binds microtubules through the C-terminal domain. Required for faithful chromosome segregation during mitosis. Regulates autophagy by playing a role in the reduction of glucose production in an adiponectin- and insulin-dependent manner. The chain is Microtubule cross-linking factor 2 (Mtcl2) from Mus musculus (Mouse).